Reading from the N-terminus, the 240-residue chain is Uridylate kinase (240 aa).

13-16 (KLSG) is an ATP binding site. The tract at residues 21-26 (GEKGFG) is involved in allosteric activation by GTP. UMP is bound at residue G55. 2 residues coordinate ATP: G56 and R60. UMP is bound by residues D75 and 136-143 (IGNPYFST). The ATP site is built by N164, Y170, and D173.

The protein belongs to the UMP kinase family. Homohexamer.

It is found in the cytoplasm. The catalysed reaction is UMP + ATP = UDP + ADP. The protein operates within pyrimidine metabolism; CTP biosynthesis via de novo pathway; UDP from UMP (UMPK route): step 1/1. With respect to regulation, allosterically activated by GTP. Inhibited by UTP. Its function is as follows. Catalyzes the reversible phosphorylation of UMP to UDP. The protein is Uridylate kinase of Staphylococcus aureus (strain Newman).